A 200-amino-acid polypeptide reads, in one-letter code: HTH-type transcriptional regulator BetI (200 aa).

An HTH tetR-type domain is found at S8–L68. Residues S31 to F50 constitute a DNA-binding region (H-T-H motif).

The protein operates within amine and polyamine biosynthesis; betaine biosynthesis via choline pathway [regulation]. In terms of biological role, repressor involved in the biosynthesis of the osmoprotectant glycine betaine. It represses transcription of the choline transporter BetT and the genes of BetAB involved in the synthesis of glycine betaine. This Proteus mirabilis (strain HI4320) protein is HTH-type transcriptional regulator BetI.